A 180-amino-acid chain; its full sequence is Protein SPMIP9 (180 aa).

As to quaternary structure, microtubule inner protein component of sperm flagellar doublet microtubules. In terms of tissue distribution, only detected after the mouse is 35 days old. Expression increases gradually from day 35 to 6 months, and remains stable after 54 days. Exclusively expressed in the epididymis and testis.

The protein localises to the nucleus. It localises to the cytoplasm. It is found in the cytoskeleton. The protein resides in the flagellum axoneme. Its function is as follows. Microtubule inner protein (MIP) part of the dynein-decorated doublet microtubules (DMTs) in flagella axoneme. The sequence is that of Protein SPMIP9 (Spmip9) from Mus musculus (Mouse).